The primary structure comprises 168 residues: Ribosome maturation factor RimM (168 aa).

In terms of domain architecture, PRC barrel spans 96 to 168 (VDEYYWGDLI…TIRVDWQKDW (73 aa)).

Belongs to the RimM family. As to quaternary structure, binds ribosomal protein uS19.

The protein localises to the cytoplasm. An accessory protein needed during the final step in the assembly of 30S ribosomal subunit, possibly for assembly of the head region. Essential for efficient processing of 16S rRNA. May be needed both before and after RbfA during the maturation of 16S rRNA. It has affinity for free ribosomal 30S subunits but not for 70S ribosomes. This is Ribosome maturation factor RimM from Aromatoleum aromaticum (strain DSM 19018 / LMG 30748 / EbN1) (Azoarcus sp. (strain EbN1)).